A 268-amino-acid polypeptide reads, in one-letter code: Undecaprenyl-diphosphatase (268 aa).

6 consecutive transmembrane segments (helical) span residues 39–59 (SETF…LIYK), 75–95 (LPYF…GLWV), 106–126 (LGPV…TEKV), 179–199 (TEFA…FAWI), 214–234 (LTLA…VKWL), and 243–263 (FIPF…LVAL).

This sequence belongs to the UppP family.

The protein resides in the cell inner membrane. It carries out the reaction di-trans,octa-cis-undecaprenyl diphosphate + H2O = di-trans,octa-cis-undecaprenyl phosphate + phosphate + H(+). Functionally, catalyzes the dephosphorylation of undecaprenyl diphosphate (UPP). Confers resistance to bacitracin. This Methylacidiphilum infernorum (isolate V4) (Methylokorus infernorum (strain V4)) protein is Undecaprenyl-diphosphatase.